Reading from the N-terminus, the 209-residue chain is Superoxide dismutase [Mn/Fe] (209 aa).

His38, His90, Asp172, and His176 together coordinate Fe(3+). His38, His90, Asp172, and His176 together coordinate Mn(2+).

This sequence belongs to the iron/manganese superoxide dismutase family. Requires Mn(2+) as cofactor. The cofactor is Fe(3+).

It carries out the reaction 2 superoxide + 2 H(+) = H2O2 + O2. Its function is as follows. Destroys superoxide anion radicals which are normally produced within the cells and which are toxic to biological systems. Catalyzes the dismutation of superoxide anion radicals into O2 and H2O2 by successive reduction and oxidation of the transition metal ion at the active site. The sequence is that of Superoxide dismutase [Mn/Fe] (sodB) from Rickettsia prowazekii (strain Madrid E).